The primary structure comprises 80 residues: Antitoxin VapB15 (80 aa).

The interval 60–80 (DFSNDEIESFSDTDRKLADES) is disordered. Residue Glu-67 participates in Mg(2+) binding. A Mn(2+)-binding site is contributed by Glu-67. Residues 71-80 (DTDRKLADES) show a composition bias toward basic and acidic residues.

Forms a VapB15-VapC15(2) heterotrimer and a VapB15(2)-VapC15(2) heterotetramer; each toxin pair forms a homodimer which creates a channel in which the antitoxin binds. The cofactor is Mg(2+). Mn(2+) is required as a cofactor.

In terms of biological role, antitoxin component of a type II toxin-antitoxin (TA) system. Neutralizes the toxic effect of cognate toxin VapC15. The chain is Antitoxin VapB15 (vapB15) from Mycobacterium tuberculosis (strain CDC 1551 / Oshkosh).